The following is a 323-amino-acid chain: Sporulation-delaying protein SdpB (323 aa).

The next 6 membrane-spanning stretches (helical) occupy residues 27 to 49 (LLGF…SYSA), 70 to 92 (SINF…IGWR), 112 to 134 (LTID…VTLL), 155 to 177 (TVLF…NAAL), 219 to 241 (IVVI…ISNI), and 248 to 270 (LVLG…FGLI).

Its subcellular location is the cell membrane. Its function is as follows. Required for the maturation of SdpC to SDP. Not required for SdpC signal peptide cleavage, secretion from the cell or disulfide bond formation. The protein is Sporulation-delaying protein SdpB of Bacillus subtilis (strain 168).